Here is a 275-residue protein sequence, read N- to C-terminus: 4-hydroxy-tetrahydrodipicolinate reductase (275 aa).

Residues 13-18 (GAAGKM) and 108-110 (GTT) contribute to the NAD(+) site. The active-site Proton donor/acceptor is the histidine 164. Histidine 165 serves as a coordination point for (S)-2,3,4,5-tetrahydrodipicolinate. The Proton donor role is filled by lysine 168. 174–175 (GT) is a (S)-2,3,4,5-tetrahydrodipicolinate binding site.

This sequence belongs to the DapB family.

It is found in the cytoplasm. It catalyses the reaction (S)-2,3,4,5-tetrahydrodipicolinate + NAD(+) + H2O = (2S,4S)-4-hydroxy-2,3,4,5-tetrahydrodipicolinate + NADH + H(+). The enzyme catalyses (S)-2,3,4,5-tetrahydrodipicolinate + NADP(+) + H2O = (2S,4S)-4-hydroxy-2,3,4,5-tetrahydrodipicolinate + NADPH + H(+). Its pathway is amino-acid biosynthesis; L-lysine biosynthesis via DAP pathway; (S)-tetrahydrodipicolinate from L-aspartate: step 4/4. In terms of biological role, catalyzes the conversion of 4-hydroxy-tetrahydrodipicolinate (HTPA) to tetrahydrodipicolinate. The protein is 4-hydroxy-tetrahydrodipicolinate reductase of Cyanothece sp. (strain PCC 7425 / ATCC 29141).